A 278-amino-acid chain; its full sequence is HTH-type transcriptional activator RhaS (278 aa).

The HTH araC/xylS-type domain occupies 174–272; it reads NQLMAWLEDH…NWSPRDIRQG (99 aa). 2 DNA-binding regions (H-T-H motif) span residues 191–212 and 239–262; these read EAVA…KQHT and VTEI…RREF.

As to quaternary structure, binds DNA as a dimer.

It is found in the cytoplasm. In terms of biological role, activates expression of the rhaBAD and rhaT operons. This chain is HTH-type transcriptional activator RhaS, found in Salmonella heidelberg (strain SL476).